The chain runs to 454 residues: Inner membrane permease YgbN (454 aa).

Residue Met1 is a topological domain, periplasmic. Residues Ser2–Ile22 traverse the membrane as a helical segment. Topologically, residues Lys23–Gln27 are cytoplasmic. The helical transmembrane segment at Pro28 to Gly48 threads the bilayer. Over Glu49–Lys52 the chain is Periplasmic. Residues Val53–Ala73 traverse the membrane as a helical segment. At Met74–Ala108 the chain is on the cytoplasmic side. A helical membrane pass occupies residues Ala109–Ile129. Residues Tyr130–Lys137 are Periplasmic-facing. Residues Ile138–Val158 form a helical membrane-spanning segment. Residues Pro159–Asp174 lie on the Cytoplasmic side of the membrane. The chain crosses the membrane as a helical span at residues Ile175 to Phe195. Residues Ala196–Pro235 lie on the Periplasmic side of the membrane. The chain crosses the membrane as a helical span at residues Gly236–Val256. The Cytoplasmic segment spans residues Ser257 to Leu273. The chain crosses the membrane as a helical span at residues Ile274–Leu294. Residues Arg295–Asp305 lie on the Periplasmic side of the membrane. The helical transmembrane segment at Ile306–Val326 threads the bilayer. Over Phe327–Ala341 the chain is Cytoplasmic. A helical transmembrane segment spans residues Asn342–Leu362. The Periplasmic segment spans residues Arg363–Ala383. A helical membrane pass occupies residues Val384 to Leu404. The Cytoplasmic portion of the chain corresponds to Gly405–Thr433. Residues Val434–Ile454 traverse the membrane as a helical segment.

The protein belongs to the GntP permease family.

Its subcellular location is the cell inner membrane. The polypeptide is Inner membrane permease YgbN (ygbN) (Escherichia coli (strain K12)).